The chain runs to 559 residues: Transcription activator of gluconeogenesis ERT1-2 (559 aa).

The segment at residues 23-51 is a DNA-binding region (zn(2)-C6 fungal-type); the sequence is CIHCQRTHLTCDNNRPCERCVARGFADTC. Disordered stretches follow at residues 63–159, 231–263, and 329–349; these read DDKE…TPSQ, SNSL…TPSA, and AGQP…DSPS. 2 stretches are compositionally biased toward low complexity: residues 139–159 and 231–244; these read QGPQ…TPSQ and SNSL…QSPN. A compositionally biased stretch (polar residues) spans 245-260; it reads THSPHNQDQPTPQAAT. The region spanning 440 to 512 is the PAS domain; the sequence is ALLEYQKFIS…ELFSRIAFGD (73 aa).

It belongs to the ERT1/acuK family.

It is found in the nucleus. In terms of biological role, transcription factor which regulates nonfermentable carbon utilization. Activator of gluconeogenetic genes. The sequence is that of Transcription activator of gluconeogenesis ERT1-2 (ERT1-2) from Yarrowia lipolytica (strain CLIB 122 / E 150) (Yeast).